Reading from the N-terminus, the 424-residue chain is Magnesium-chelatase subunit ChlI-1, chloroplastic (424 aa).

The transit peptide at 1–60 (MASLLGTSSSAIWASPSLSSPSSKPSSSPICFRPGKLFGSKLNAGIQIRPKKNRSRYHVS) directs the protein to the chloroplast. V61 carries the N-acetylvaline modification. 2 disulfide bridges follow: C102–C193 and C354–C396. 119 to 126 (GDRGTGKS) provides a ligand contact to ATP. The residue at position 355 (S355) is a Phosphoserine.

The protein belongs to the Mg-chelatase subunits D/I family. As to quaternary structure, the magnesium chelatase complex is a heterotrimer consisting of subunits CHLI, CHLD and CHLH. Interacts with CHLH and CHLD.

It localises to the plastid. It is found in the chloroplast. The catalysed reaction is protoporphyrin IX + Mg(2+) + ATP + H2O = Mg-protoporphyrin IX + ADP + phosphate + 3 H(+). It functions in the pathway porphyrin-containing compound metabolism; chlorophyll biosynthesis. With respect to regulation, redox regulation; active in reducing conditions, inactive in oxidizing conditions. Thioredoxins f and m mediate the reversible reductive activation of oxidized CHLI1. Functionally, involved in chlorophyll biosynthesis. Catalyzes the insertion of magnesium ion into protoporphyrin IX to yield Mg-protoporphyrin IX. The magnesium-chelatase is a complex of three subunits, CHLI, CHLD and CHLH. The reaction takes place in two steps, with an ATP-dependent activation followed by an ATP-dependent chelation step. Possesses high affinity for ATP and may play a major role in chlorophyll biosynthesis. Does not bind abscisic acid (ABA), but is a positive regulator of ABA signaling. May be involved in ABA signaling in the control of stomatal aperture, but does not seem to have an effect on ABA-induced gene expression. The chain is Magnesium-chelatase subunit ChlI-1, chloroplastic (CHLI1) from Arabidopsis thaliana (Mouse-ear cress).